Here is a 399-residue protein sequence, read N- to C-terminus: C-type lectin domain family 4 member M (399 aa).

The Cytoplasmic portion of the chain corresponds to methionine 1–glycine 49. Residues leucine 14–leucine 15 carry the Endocytosis signal motif. The helical; Signal-anchor for type II membrane protein transmembrane segment at proline 50–valine 70 threads the bilayer. Residues glutamine 71–glutamate 399 lie on the Extracellular side of the membrane. Asparagine 92 carries an N-linked (GlcNAc...) asparagine glycan. 7 tandem repeats follow at residues lysine 108–serine 130, arginine 131–serine 153, arginine 154–serine 176, lysine 177–serine 199, lysine 200–serine 222, lysine 223–serine 245, and lysine 246–cysteine 268. Residues lysine 108 to proline 269 form a 7 X approximate tandem repeats region. 4 disulfides stabilise this stretch: cysteine 265-cysteine 395, cysteine 268-cysteine 279, cysteine 296-cysteine 389, and cysteine 368-cysteine 381. Residues phenylalanine 274–lysine 390 enclose the C-type lectin domain. Ca(2+)-binding residues include glutamate 359, asparagine 361, serine 363, glutamate 366, asparagine 377, and aspartate 378. Asparagine 361 carries an N-linked (GlcNAc...) asparagine glycan.

As to quaternary structure, homotetramer.

Its subcellular location is the membrane. Its function is as follows. Probable pathogen-recognition receptor involved in peripheral immune surveillance in liver. May mediate the endocytosis of pathogens which are subsequently degraded in lysosomal compartments. Probably recognizes in a calcium-dependent manner high mannose N-linked oligosaccharides in a variety of pathogen antigens. Is a receptor for ICAM3, probably by binding to mannose-like carbohydrates. The sequence is that of C-type lectin domain family 4 member M (CLEC4M) from Nomascus concolor (Black crested gibbon).